The sequence spans 474 residues: Proline--tRNA ligase (474 aa).

It belongs to the class-II aminoacyl-tRNA synthetase family. ProS type 3 subfamily. As to quaternary structure, homodimer.

It localises to the cytoplasm. It catalyses the reaction tRNA(Pro) + L-proline + ATP = L-prolyl-tRNA(Pro) + AMP + diphosphate. Functionally, catalyzes the attachment of proline to tRNA(Pro) in a two-step reaction: proline is first activated by ATP to form Pro-AMP and then transferred to the acceptor end of tRNA(Pro). The sequence is that of Proline--tRNA ligase from Aster yellows witches'-broom phytoplasma (strain AYWB).